The chain runs to 738 residues: NAD(P)H-quinone oxidoreductase subunit 5, chloroplastic (738 aa).

The next 17 membrane-spanning stretches (helical) occupy residues 9–29 (WVIP…LFLI), 39–59 (IWAF…LHLS), 89–109 (VDPL…LVLI), 125–145 (FVYI…SNLI), 147–167 (IYFF…FWFT), 185–205 (GDFG…SLEF), 219–239 (NGIN…GAVA), 258–278 (TPIS…FLLA), 280–300 (LLPL…IGTI), 327–347 (LGYM…FHLI), 354–374 (ALLF…VGYS), 396–416 (TTFL…CFWS), 425–445 (WLYS…TAFY), 542–562 (LFPL…GIHF), 610–630 (SLAI…YSFF), 691–711 (GVID…GEEI), and 717–737 (GRIS…LFFI).

The protein belongs to the complex I subunit 5 family. NDH is composed of at least 16 different subunits, 5 of which are encoded in the nucleus.

It is found in the plastid. The protein localises to the chloroplast thylakoid membrane. The catalysed reaction is a plastoquinone + NADH + (n+1) H(+)(in) = a plastoquinol + NAD(+) + n H(+)(out). It catalyses the reaction a plastoquinone + NADPH + (n+1) H(+)(in) = a plastoquinol + NADP(+) + n H(+)(out). In terms of biological role, NDH shuttles electrons from NAD(P)H:plastoquinone, via FMN and iron-sulfur (Fe-S) centers, to quinones in the photosynthetic chain and possibly in a chloroplast respiratory chain. The immediate electron acceptor for the enzyme in this species is believed to be plastoquinone. Couples the redox reaction to proton translocation, and thus conserves the redox energy in a proton gradient. The protein is NAD(P)H-quinone oxidoreductase subunit 5, chloroplastic (ndhF) of Zea mays (Maize).